Here is a 95-residue protein sequence, read N- to C-terminus: Putative regulatory protein STH1338 (95 aa).

The protein belongs to the RemA family.

This is Putative regulatory protein STH1338 from Symbiobacterium thermophilum (strain DSM 24528 / JCM 14929 / IAM 14863 / T).